Here is a 510-residue protein sequence, read N- to C-terminus: Bifunctional pantoate ligase/cytidylate kinase (510 aa).

The interval M1–V276 is pantoate--beta-alanine ligase. Residue M29–H36 coordinates ATP. H36 acts as the Proton donor in catalysis. Residue Q61 coordinates (R)-pantoate. A beta-alanine-binding site is contributed by Q61. G150–D153 serves as a coordination point for ATP. Position 156 (Q156) interacts with (R)-pantoate. L187–R190 is an ATP binding site. Residues F277–K510 are cytidylate kinase.

It in the N-terminal section; belongs to the pantothenate synthetase family. This sequence in the C-terminal section; belongs to the cytidylate kinase family. Type 1 subfamily.

Its subcellular location is the cytoplasm. The enzyme catalyses (R)-pantoate + beta-alanine + ATP = (R)-pantothenate + AMP + diphosphate + H(+). It catalyses the reaction CMP + ATP = CDP + ADP. It carries out the reaction dCMP + ATP = dCDP + ADP. The protein operates within cofactor biosynthesis; (R)-pantothenate biosynthesis; (R)-pantothenate from (R)-pantoate and beta-alanine: step 1/1. Its function is as follows. Catalyzes the condensation of pantoate with beta-alanine in an ATP-dependent reaction via a pantoyl-adenylate intermediate. Functionally, catalyzes the transfer of a phosphate group from ATP to either CMP or dCMP to form CDP or dCDP and ADP, respectively. The chain is Bifunctional pantoate ligase/cytidylate kinase from Prochlorococcus marinus (strain MIT 9301).